The following is a 283-amino-acid chain: Elongation factor Ts (283 aa).

The segment at 80 to 83 (TDFV) is involved in Mg(2+) ion dislocation from EF-Tu.

Belongs to the EF-Ts family.

Its subcellular location is the cytoplasm. In terms of biological role, associates with the EF-Tu.GDP complex and induces the exchange of GDP to GTP. It remains bound to the aminoacyl-tRNA.EF-Tu.GTP complex up to the GTP hydrolysis stage on the ribosome. The polypeptide is Elongation factor Ts (Actinobacillus pleuropneumoniae serotype 3 (strain JL03)).